Consider the following 100-residue polypeptide: NADH-quinone oxidoreductase subunit K (100 aa).

The next 3 helical transmembrane spans lie at 1 to 21 (MIGLNHYLIVSGLLFCIGLAG), 28 to 48 (ILLLFFSTEIMLNAINIGFVA), and 64 to 84 (FIIAIAASEVAIGLGLVILWF).

The protein belongs to the complex I subunit 4L family. As to quaternary structure, NDH-1 is composed of 14 different subunits. Subunits NuoA, H, J, K, L, M, N constitute the membrane sector of the complex.

It localises to the cell inner membrane. It catalyses the reaction a quinone + NADH + 5 H(+)(in) = a quinol + NAD(+) + 4 H(+)(out). In terms of biological role, NDH-1 shuttles electrons from NADH, via FMN and iron-sulfur (Fe-S) centers, to quinones in the respiratory chain. The immediate electron acceptor for the enzyme in this species is believed to be ubiquinone. Couples the redox reaction to proton translocation (for every two electrons transferred, four hydrogen ions are translocated across the cytoplasmic membrane), and thus conserves the redox energy in a proton gradient. The polypeptide is NADH-quinone oxidoreductase subunit K (Helicobacter pylori (strain Shi470)).